We begin with the raw amino-acid sequence, 84 residues long: uncharacterized protein (84 aa).

Transmembrane regions (helical) follow at residues 7-27 (HVNF…ILCI) and 52-72 (ITII…INPC).

It is found in the membrane. This is an uncharacterized protein from Saccharomyces cerevisiae (strain ATCC 204508 / S288c) (Baker's yeast).